Consider the following 302-residue polypeptide: Methionyl-tRNA formyltransferase (302 aa).

Residue 108–111 coordinates (6S)-5,6,7,8-tetrahydrofolate; the sequence is SLLP. Over residues 276–288 the composition is skewed to basic and acidic residues; the sequence is REGKRPMEPEEFL. Residues 276–302 form a disordered region; it reads REGKRPMEPEEFLRGFPLPEGSRAHTA.

This sequence belongs to the Fmt family.

The catalysed reaction is L-methionyl-tRNA(fMet) + (6R)-10-formyltetrahydrofolate = N-formyl-L-methionyl-tRNA(fMet) + (6S)-5,6,7,8-tetrahydrofolate + H(+). Attaches a formyl group to the free amino group of methionyl-tRNA(fMet). The formyl group appears to play a dual role in the initiator identity of N-formylmethionyl-tRNA by promoting its recognition by IF2 and preventing the misappropriation of this tRNA by the elongation apparatus. This chain is Methionyl-tRNA formyltransferase, found in Cereibacter sphaeroides (strain KD131 / KCTC 12085) (Rhodobacter sphaeroides).